We begin with the raw amino-acid sequence, 391 residues long: Phosphoglycerate kinase (391 aa).

Substrate is bound by residues 21–23, Arg-36, 59–62, Arg-113, and Arg-146; these read DLN and HLGR. ATP contacts are provided by residues Lys-197, Glu-319, and 345 to 348; that span reads GGDT.

The protein belongs to the phosphoglycerate kinase family. As to quaternary structure, monomer.

The protein resides in the cytoplasm. It catalyses the reaction (2R)-3-phosphoglycerate + ATP = (2R)-3-phospho-glyceroyl phosphate + ADP. It participates in carbohydrate degradation; glycolysis; pyruvate from D-glyceraldehyde 3-phosphate: step 2/5. The sequence is that of Phosphoglycerate kinase from Shewanella putrefaciens (strain CN-32 / ATCC BAA-453).